The primary structure comprises 85 residues: Small ribosomal subunit protein uS17 (85 aa).

It belongs to the universal ribosomal protein uS17 family. Part of the 30S ribosomal subunit.

In terms of biological role, one of the primary rRNA binding proteins, it binds specifically to the 5'-end of 16S ribosomal RNA. The polypeptide is Small ribosomal subunit protein uS17 (Natranaerobius thermophilus (strain ATCC BAA-1301 / DSM 18059 / JW/NM-WN-LF)).